The sequence spans 460 residues: UDP-glycosyltransferase 74B1 (460 aa).

The Proton acceptor role is filled by His-22. His-22 lines the an anthocyanidin pocket. Catalysis depends on Asp-113, which acts as the Charge relay. Residues Thr-135, Gln-339, His-354, Trp-357, Asn-358, Ser-359, Glu-362, Asp-378, and Gln-379 each coordinate UDP-alpha-D-glucose.

It belongs to the UDP-glycosyltransferase family. In terms of tissue distribution, expressed in the vasculature, the apical meristems of roots, shoots and inflorescence, and the junction of organ or branches.

It catalyses the reaction (Z)-2-phenyl-1-thioacetohydroximate + UDP-alpha-D-glucose = (Z)-desulfoglucotropeolin + UDP. It carries out the reaction a (Z)-omega-(methylsulfanyl)alkyl-thiohydroximate + UDP-alpha-D-glucose = an aliphatic (Z)-desulfo-glucosinolate + UDP. The enzyme catalyses (Z)-2-(indol-3-yl)-1-thioacetohydroximate + UDP-alpha-D-glucose = (Z)-indolylmethyl desulfoglucosinolate + UDP. Its function is as follows. Involved in the biosynthesis of glucosinolate. In in vitro assay, may use phenylacetothiohydroximate (PATH), but not phenylacetic acid (PAA), indole-3-acetic acid (IAA) or salicylic acid (SA) as substrate. Specific for the thiohydroximate functional group and does not glucosylate the carboxylate group or a hydroxyl group. This Arabidopsis thaliana (Mouse-ear cress) protein is UDP-glycosyltransferase 74B1 (UGT74B1).